The chain runs to 784 residues: Toll-like receptor 2 (784 aa).

An N-terminal signal peptide occupies residues 1 to 18 (MPHTLWMVWVLGVIISLS). The Extracellular segment spans residues 19–587 (KEESSNQASL…VRLSVSECHR (569 aa)). Cysteine 30 and cysteine 36 are oxidised to a cystine. LRR repeat units lie at residues 54–77 (VKSLDLSNNRITYISNSDLQRYVN), 78–101 (LQALVLTSNGINTIEEDSFSSLGR), 102–125 (LEHLDLSYNYLSNLSSSWFKPLSS), 126–150 (LKFLNLLGNPYKTLGETSLFSHLTK), 151–175 (LRILRVGNMDTFTKIQRKDFAGLTF), 176–199 (LEELEIDASDLQSYEPKSLKSIQN), 200–223 (VSHLILHMKQHILLLEIFVDLTSS), 224–250 (VECLELRDTDLDTFHFSELSTGETNSL), 251–278 (IKKFTFRNVKITDESLFQVMKLLSQISG), 279–308 (LLELEFDDCTLNGVGDFRGSDNDRVIDPGK), 309–337 (VETVTIRRLHIPQFYSFNDLSTLYPLTER), 338–361 (VKRITVENSKVFLVPCLLSRHLKS), 362–388 (LEYLDLSENLMVEEYLKNSACEDAWPS), 389–414 (LQTLILRQNHLASLGKTGETLLTLKN), 415–437 (LTNLDISKNTFHYMPETCQWPEK), 438–457 (MKYLNLSSTRIHSVTGCIPK), 458–478 (TLEILDISNNNLNLFSLNLPQ), 479–500 (LKELYISRNKLMTLPDASLLPM), and 501–524 (LLVLKISRNTITTFSKEQLDSFHT). An N-linked (GlcNAc...) asparagine glycan is attached at asparagine 114. N-linked (GlcNAc...) asparagine glycosylation occurs at asparagine 199. Cysteines 353 and 382 form a disulfide. N-linked (GlcNAc...) asparagine glycosylation occurs at asparagine 414. Cysteine 432 and cysteine 454 are oxidised to a cystine. A glycan (N-linked (GlcNAc...) asparagine) is linked at asparagine 442. In terms of domain architecture, LRRCT spans 525–579 (LKTLEAGGNNFICSCEFLSFTQEQQALAKVLVDWPANYLCDSPSHVRGQRVQDVR). A helical transmembrane segment spans residues 588–608 (AALVSGMCCALFLLILLMGVL). Residues 609-784 (CHRFHGLWYM…WVNLRAAIKS (176 aa)) are Cytoplasmic-facing. Residues 639 to 782 (ICYDAFVSYS…GFWVNLRAAI (144 aa)) enclose the TIR domain. Lysine 754 participates in a covalent cross-link: Glycyl lysine isopeptide (Lys-Gly) (interchain with G-Cter in ubiquitin). Residues 761–778 (YLEWPMDEARQEGFWVNL) carry the ATG16L1-binding motif motif.

The protein belongs to the Toll-like receptor family. In terms of assembly, interacts with LY96, TLR1 and TLR6 (via extracellular domain). TLR2 seems to exist in heterodimers with either TLR1 or TLR6 before stimulation by the ligand. The heterodimers form bigger oligomers in response to their corresponding ligands as well as further heterotypic associations with other receptors such as CD14 and/or CD36. Binds MYD88 (via TIR domain). Interacts with TICAM1. Interacts with CNPY3. Interacts with ATG16L1. Interacts with PPP1R11. Interacts with TICAM2. Interacts with TIRAP. Post-translationally, ubiquitinated at Lys-754 by PPP1R11, leading to its degradation. Deubiquitinated by USP2. In terms of processing, glycosylation of Asn-442 is critical for secretion of the N-terminal ectodomain of TLR2.

The protein resides in the membrane. Its subcellular location is the cytoplasmic vesicle. It is found in the phagosome membrane. The protein localises to the membrane raft. Cooperates with LY96 to mediate the innate immune response to bacterial lipoproteins and other microbial cell wall components. Cooperates with TLR1 or TLR6 to mediate the innate immune response to bacterial lipoproteins or lipopeptides. Acts via MYD88 and TRAF6, leading to NF-kappa-B activation, cytokine secretion and the inflammatory response. May also promote apoptosis in response to lipoproteins. Forms activation clusters composed of several receptors depending on the ligand, these clusters trigger signaling from the cell surface and subsequently are targeted to the Golgi in a lipid-raft dependent pathway. Forms the cluster TLR2:TLR6:CD14:CD36 in response to diacylated lipopeptides and TLR2:TLR1:CD14 in response to triacylated lipopeptides. The polypeptide is Toll-like receptor 2 (TLR2) (Macaca fascicularis (Crab-eating macaque)).